Here is a 404-residue protein sequence, read N- to C-terminus: Type II restriction enzyme EcoRII (404 aa).

Residue Tyr-308 is part of the active site.

In terms of assembly, homodimer. It depends on Mg(2+) as a cofactor.

It catalyses the reaction Endonucleolytic cleavage of DNA to give specific double-stranded fragments with terminal 5'-phosphates.. An E and P subtype restriction enzyme that recognizes the double-stranded sequence 5'-CCWGG-3' and cleaves before C-1. The chain is Type II restriction enzyme EcoRII (ecoRIIR) from Escherichia coli.